Reading from the N-terminus, the 107-residue chain is Large ribosomal subunit protein bL21 (107 aa).

The protein belongs to the bacterial ribosomal protein bL21 family. In terms of assembly, part of the 50S ribosomal subunit. Contacts protein L20.

Functionally, this protein binds to 23S rRNA in the presence of protein L20. The polypeptide is Large ribosomal subunit protein bL21 (Chlamydia muridarum (strain MoPn / Nigg)).